Consider the following 714-residue polypeptide: Probable metal-nicotianamine transporter YSL5 (714 aa).

The disordered stretch occupies residues His-17–Asp-44. The segment covering Glu-27–Phe-36 has biased composition (basic and acidic residues). The next 13 membrane-spanning stretches (helical) occupy residues Ala-67–Leu-87, Gly-90–Trp-110, Cys-135–Met-155, Leu-175–Pro-195, Val-236–Gly-256, Ile-295–Ile-315, Val-340–Ser-360, Ile-413–Leu-433, Ile-445–Leu-465, Leu-477–Leu-497, Phe-531–Leu-551, Leu-593–Leu-613, and Phe-631–Trp-651.

The protein belongs to the YSL (TC 2.A.67.2) family.

It is found in the membrane. May be involved in the transport of nicotianamine-chelated metals. The polypeptide is Probable metal-nicotianamine transporter YSL5 (YSL5) (Arabidopsis thaliana (Mouse-ear cress)).